The following is a 110-amino-acid chain: Large ribosomal subunit protein uL22 (110 aa).

It belongs to the universal ribosomal protein uL22 family. As to quaternary structure, part of the 50S ribosomal subunit.

Its function is as follows. This protein binds specifically to 23S rRNA; its binding is stimulated by other ribosomal proteins, e.g. L4, L17, and L20. It is important during the early stages of 50S assembly. It makes multiple contacts with different domains of the 23S rRNA in the assembled 50S subunit and ribosome. In terms of biological role, the globular domain of the protein is located near the polypeptide exit tunnel on the outside of the subunit, while an extended beta-hairpin is found that lines the wall of the exit tunnel in the center of the 70S ribosome. The protein is Large ribosomal subunit protein uL22 of Shewanella baltica (strain OS223).